Consider the following 263-residue polypeptide: Probable 6-oxopurine nucleoside phosphorylase (263 aa).

Phosphate is bound by residues threonine 9, 49 to 50, and 82 to 83; these read RH and TA. Residue methionine 181 coordinates substrate. Phosphate is bound at residue threonine 182. 205-207 contacts substrate; it reads NYA.

The protein belongs to the PNP/MTAP phosphorylase family. MTAP subfamily. Homohexamer. Dimer of a homotrimer.

It catalyses the reaction a purine D-ribonucleoside + phosphate = a purine nucleobase + alpha-D-ribose 1-phosphate. It functions in the pathway purine metabolism; purine nucleoside salvage. Its function is as follows. Purine nucleoside phosphorylase which is highly specific for 6-oxopurine nucleosides. Cleaves guanosine or inosine to respective bases and sugar-1-phosphate molecules. Involved in purine salvage. This chain is Probable 6-oxopurine nucleoside phosphorylase, found in Dictyoglomus turgidum (strain DSM 6724 / Z-1310).